A 592-amino-acid chain; its full sequence is N-acetyltransferase ESCO2 (592 aa).

2 positions are modified to phosphoserine: S41 and S85. The tract at residues 267–294 (KSSVKVQNARSKNEEKLRKNPSGAVVSS) is disordered. A Phosphoserine modification is found at S309. The segment at 384–408 (TVCKSCGMIYTASNPEDEIQHLQHH) adopts a CCHH-type zinc-finger fold.

This sequence belongs to the acetyltransferase family. ECO subfamily.

The protein resides in the nucleus. It is found in the chromosome. It catalyses the reaction L-lysyl-[protein] + acetyl-CoA = N(6)-acetyl-L-lysyl-[protein] + CoA + H(+). In terms of biological role, acetyltransferase required for the establishment of sister chromatid cohesion. Couples the processes of cohesion and DNA replication to ensure that only sister chromatids become paired together. In contrast to the structural cohesins, the deposition and establishment factors are required only during the S phase. Acetylates the cohesin component SMC3. This chain is N-acetyltransferase ESCO2 (Esco2), found in Mus musculus (Mouse).